The sequence spans 228 residues: Ribosomal RNA small subunit methyltransferase G (228 aa).

S-adenosyl-L-methionine contacts are provided by residues G92, F97, 115-117 (EAT), 143-144 (AE), and R156.

Belongs to the methyltransferase superfamily. RNA methyltransferase RsmG family.

It localises to the cytoplasm. Functionally, specifically methylates the N7 position of a guanine in 16S rRNA. The chain is Ribosomal RNA small subunit methyltransferase G from Thermosynechococcus vestitus (strain NIES-2133 / IAM M-273 / BP-1).